Reading from the N-terminus, the 564-residue chain is Urocanate hydratase (564 aa).

Residues 58-59, glutamine 136, 182-184, glutamate 202, arginine 207, 245-246, 266-270, 276-277, and tyrosine 325 each bind NAD(+); these read GG, GMG, NA, QTSAH, and YL. The active site involves cysteine 413. Glycine 495 lines the NAD(+) pocket.

The protein belongs to the urocanase family. NAD(+) serves as cofactor.

It is found in the cytoplasm. It catalyses the reaction 4-imidazolone-5-propanoate = trans-urocanate + H2O. It functions in the pathway amino-acid degradation; L-histidine degradation into L-glutamate; N-formimidoyl-L-glutamate from L-histidine: step 2/3. In terms of biological role, catalyzes the conversion of urocanate to 4-imidazolone-5-propionate. The protein is Urocanate hydratase of Vibrio atlanticus (strain LGP32) (Vibrio splendidus (strain Mel32)).